Here is a 418-residue protein sequence, read N- to C-terminus: UDP-N-acetylglucosamine 1-carboxyvinyltransferase (418 aa).

Residue Lys22 to Asn23 coordinates phosphoenolpyruvate. Arg92 is a UDP-N-acetyl-alpha-D-glucosamine binding site. Residue Cys116 is the Proton donor of the active site. Position 116 is a 2-(S-cysteinyl)pyruvic acid O-phosphothioketal (Cys116). Residues Arg121–Leu125, Asp305, and Leu327 contribute to the UDP-N-acetyl-alpha-D-glucosamine site.

It belongs to the EPSP synthase family. MurA subfamily.

It localises to the cytoplasm. The enzyme catalyses phosphoenolpyruvate + UDP-N-acetyl-alpha-D-glucosamine = UDP-N-acetyl-3-O-(1-carboxyvinyl)-alpha-D-glucosamine + phosphate. The protein operates within cell wall biogenesis; peptidoglycan biosynthesis. Its function is as follows. Cell wall formation. Adds enolpyruvyl to UDP-N-acetylglucosamine. In Campylobacter jejuni subsp. jejuni serotype O:23/36 (strain 81-176), this protein is UDP-N-acetylglucosamine 1-carboxyvinyltransferase.